Reading from the N-terminus, the 350-residue chain is Probable choline kinase 2 (350 aa).

The ATP site is built by Arg73, Gln210, and Asp227.

This sequence belongs to the choline/ethanolamine kinase family.

It carries out the reaction choline + ATP = phosphocholine + ADP + H(+). It participates in phospholipid metabolism; phosphatidylcholine biosynthesis; phosphocholine from choline: step 1/1. Its function is as follows. Involved in phospholipid biosynthesis. Catalyzes the first step in phosphatidylcholine biosynthesis. This is Probable choline kinase 2 from Arabidopsis thaliana (Mouse-ear cress).